A 247-amino-acid polypeptide reads, in one-letter code: Coproheme decarboxylase (247 aa).

Residues arginine 129, 143 to 147 (YPMDK), histidine 170, glutamine 183, and serine 221 each bind Fe-coproporphyrin III. Tyrosine 143 is a catalytic residue.

It belongs to the ChdC family. Type 1 subfamily. Requires Fe-coproporphyrin III as cofactor.

It catalyses the reaction Fe-coproporphyrin III + 2 H2O2 + 2 H(+) = heme b + 2 CO2 + 4 H2O. The enzyme catalyses Fe-coproporphyrin III + H2O2 + H(+) = harderoheme III + CO2 + 2 H2O. It carries out the reaction harderoheme III + H2O2 + H(+) = heme b + CO2 + 2 H2O. It functions in the pathway porphyrin-containing compound metabolism; protoheme biosynthesis. Its function is as follows. Involved in coproporphyrin-dependent heme b biosynthesis. Catalyzes the decarboxylation of Fe-coproporphyrin III (coproheme) to heme b (protoheme IX), the last step of the pathway. The reaction occurs in a stepwise manner with a three-propionate intermediate. This Bacillus cereus (strain AH820) protein is Coproheme decarboxylase.